A 150-amino-acid chain; its full sequence is 3-hydroxyacyl-[acyl-carrier-protein] dehydratase FabZ (150 aa).

His52 is an active-site residue.

It belongs to the thioester dehydratase family. FabZ subfamily.

The protein resides in the cytoplasm. The catalysed reaction is a (3R)-hydroxyacyl-[ACP] = a (2E)-enoyl-[ACP] + H2O. Involved in unsaturated fatty acids biosynthesis. Catalyzes the dehydration of short chain beta-hydroxyacyl-ACPs and long chain saturated and unsaturated beta-hydroxyacyl-ACPs. In Cupriavidus metallidurans (strain ATCC 43123 / DSM 2839 / NBRC 102507 / CH34) (Ralstonia metallidurans), this protein is 3-hydroxyacyl-[acyl-carrier-protein] dehydratase FabZ.